We begin with the raw amino-acid sequence, 185 residues long: Serine/arginine-rich splicing factor RSZ21A (185 aa).

Positions alanine 2–serine 73 constitute an RRM domain. Residues serine 87–leucine 104 form a CCHC-type zinc finger. The segment at glycine 109–serine 185 is disordered. Basic residues predominate over residues glycine 114–arginine 131. Composition is skewed to low complexity over residues serine 132–arginine 145 and valine 152–serine 163.

It belongs to the splicing factor SR family. Post-translationally, extensively phosphorylated on serine residues in the RS domain. As to expression, expressed in roots, leaves and immature seeds.

It localises to the nucleus. Its function is as follows. Involved in pre-mRNA splicing. The protein is Serine/arginine-rich splicing factor RSZ21A (RSZ21A) of Oryza sativa subsp. japonica (Rice).